The following is a 101-amino-acid chain: Urease subunit beta (101 aa).

Belongs to the urease beta subunit family. In terms of assembly, heterotrimer of UreA (gamma), UreB (beta) and UreC (alpha) subunits. Three heterotrimers associate to form the active enzyme.

It is found in the cytoplasm. The catalysed reaction is urea + 2 H2O + H(+) = hydrogencarbonate + 2 NH4(+). Its pathway is nitrogen metabolism; urea degradation; CO(2) and NH(3) from urea (urease route): step 1/1. The sequence is that of Urease subunit beta from Pseudomonas fluorescens (strain SBW25).